We begin with the raw amino-acid sequence, 97 residues long: Large ribosomal subunit protein bL28 (97 aa).

It belongs to the bacterial ribosomal protein bL28 family.

The chain is Large ribosomal subunit protein bL28 from Rickettsia africae (strain ESF-5).